The chain runs to 179 residues: UPF0167 protein PA1536 (179 aa).

The protein belongs to the UPF0167 family.

The polypeptide is UPF0167 protein PA1536 (Pseudomonas aeruginosa (strain ATCC 15692 / DSM 22644 / CIP 104116 / JCM 14847 / LMG 12228 / 1C / PRS 101 / PAO1)).